Reading from the N-terminus, the 400-residue chain is tRNA pseudouridine synthase Pus10 (400 aa).

Positions Gln-77–Arg-194 constitute a THUMP domain. Tyr-301 contacts substrate.

Belongs to the pseudouridine synthase Pus10 family.

The catalysed reaction is uridine(54) in tRNA = pseudouridine(54) in tRNA. It carries out the reaction uridine(55) in tRNA = pseudouridine(55) in tRNA. Responsible for synthesis of pseudouridine from uracil-54 and uracil-55 in the psi GC loop of transfer RNAs. This chain is tRNA pseudouridine synthase Pus10, found in Acidilobus saccharovorans (strain DSM 16705 / JCM 18335 / VKM B-2471 / 345-15).